We begin with the raw amino-acid sequence, 213 residues long: Octanoyltransferase (213 aa).

Residues 35 to 213 form the BPL/LPL catalytic domain; it reads DERGDAVLLL…ERHLPTLIEP (179 aa). Substrate is bound by residues 73–80, 145–147, and 158–160; these read RGGKITWH, AIG, and GFS. Catalysis depends on cysteine 176, which acts as the Acyl-thioester intermediate.

Belongs to the LipB family.

The protein resides in the cytoplasm. The catalysed reaction is octanoyl-[ACP] + L-lysyl-[protein] = N(6)-octanoyl-L-lysyl-[protein] + holo-[ACP] + H(+). It participates in protein modification; protein lipoylation via endogenous pathway; protein N(6)-(lipoyl)lysine from octanoyl-[acyl-carrier-protein]: step 1/2. Catalyzes the transfer of endogenously produced octanoic acid from octanoyl-acyl-carrier-protein onto the lipoyl domains of lipoate-dependent enzymes. Lipoyl-ACP can also act as a substrate although octanoyl-ACP is likely to be the physiological substrate. This chain is Octanoyltransferase, found in Salinispora tropica (strain ATCC BAA-916 / DSM 44818 / JCM 13857 / NBRC 105044 / CNB-440).